We begin with the raw amino-acid sequence, 80 residues long: Small pacifastin protease inhibitor (80 aa).

Positions 1 to 24 are cleaved as a signal peptide; sequence MSKVLKVGLLLLLVAVAASAYAVA. The propeptide occupies 25–47; sequence EENGAPKENKQLPQIDDYGVTNK. Residues 45–80 enclose the Pacifastin domain; it reads TNKCPANQPFKWNCNYCTCGPEGKDASCTRMACPQH. Cystine bridges form between cysteine 48–cysteine 63, cysteine 58–cysteine 77, and cysteine 61–cysteine 72.

This sequence belongs to the protease inhibitor I19 family. In terms of tissue distribution, expressed in the venom apparatus. Low transcript levels are also detected in other tissues.

It localises to the secreted. In terms of biological role, parasitic wasp protein that may interfere with the host immune response. The recombinant protein inhibits trypsin activity and prophenoloxidase (PPO) activation, an enzyme essential for both clotting and insect innate immune responses. It does not inhibit activity of chymotrypsin and protease K, and has no effect on phenoloxidase (PO) activity. The protein is Small pacifastin protease inhibitor of Nasonia vitripennis (Parasitic wasp).